Here is a 270-residue protein sequence, read N- to C-terminus: Flagellar hook-basal body complex protein FlhO (270 aa).

It belongs to the flagella basal body rod proteins family.

Not required for motility. This chain is Flagellar hook-basal body complex protein FlhO (flhO), found in Bacillus subtilis (strain 168).